Reading from the N-terminus, the 514-residue chain is Membrane-bound lytic murein transglycosylase F (514 aa).

The first 30 residues, 1–30, serve as a signal peptide directing secretion; the sequence is MKKLKINYLFIGILTLLLAAALWPSIPWFG. Positions 31–269 are non-LT domain; it reads KTENHVAAIQ…RIEEKYLGHG (239 aa). The segment at 270 to 514 is LT domain; the sequence is DDFDYVDTRS…LFTPQKKEEK (245 aa). Glu-314 is an active-site residue.

It in the N-terminal section; belongs to the bacterial solute-binding protein 3 family. This sequence in the C-terminal section; belongs to the transglycosylase Slt family.

The protein resides in the cell outer membrane. The catalysed reaction is Exolytic cleavage of the (1-&gt;4)-beta-glycosidic linkage between N-acetylmuramic acid (MurNAc) and N-acetylglucosamine (GlcNAc) residues in peptidoglycan, from either the reducing or the non-reducing ends of the peptidoglycan chains, with concomitant formation of a 1,6-anhydrobond in the MurNAc residue.. Functionally, murein-degrading enzyme that degrades murein glycan strands and insoluble, high-molecular weight murein sacculi, with the concomitant formation of a 1,6-anhydromuramoyl product. Lytic transglycosylases (LTs) play an integral role in the metabolism of the peptidoglycan (PG) sacculus. Their lytic action creates space within the PG sacculus to allow for its expansion as well as for the insertion of various structures such as secretion systems and flagella. The protein is Membrane-bound lytic murein transglycosylase F of Salmonella arizonae (strain ATCC BAA-731 / CDC346-86 / RSK2980).